The primary structure comprises 622 residues: Low affinity potassium transport system protein Kup (622 aa).

Transmembrane regions (helical) follow at residues 9–29 (LPAI…TSPL), 49–69 (VFGF…IKYL), 103–123 (VIMG…TPAI), 137–157 (PQLD…LFMI), 165–185 (VGKL…GLGL), 213–233 (VSFI…ALYA), 247–267 (WFTV…ALLL), 276–296 (PFFL…AALA), 337–357 (IYIP…IVSF), 363–383 (LAAA…ILST), 396–416 (FVAL…TANL), and 419–439 (LLSG…VMTT).

This sequence belongs to the HAK/KUP transporter (TC 2.A.72) family.

The protein resides in the cell inner membrane. It catalyses the reaction K(+)(in) + H(+)(in) = K(+)(out) + H(+)(out). Its function is as follows. Responsible for the low-affinity transport of potassium into the cell. Likely operates as a K(+):H(+) symporter. The polypeptide is Low affinity potassium transport system protein Kup (Shigella sonnei (strain Ss046)).